We begin with the raw amino-acid sequence, 359 residues long: Caffeic acid 3-O-methyltransferase (359 aa).

Residue 126–132 (MNQDKVL) coordinates substrate. A substrate binding region spans residues 158–176 (AFEYHGTDPRFNKVFNRGM). G204, D227, D247, M248, and K261 together coordinate S-adenosyl-L-methionine. The active-site Proton acceptor is H265.

This sequence belongs to the class I-like SAM-binding methyltransferase superfamily. Cation-independent O-methyltransferase family. COMT subfamily. Homodimer. In terms of tissue distribution, fruit. Not expressed in leaf.

It carries out the reaction (E)-caffeate + S-adenosyl-L-methionine = (E)-ferulate + S-adenosyl-L-homocysteine + H(+). It functions in the pathway aromatic compound metabolism; phenylpropanoid biosynthesis. Its function is as follows. Catalyzes the conversion of caffeic acid to ferulic acid and of 5-hydroxyferulic acid to sinapic acid. The resulting products may subsequently be converted to the corresponding alcohols that are incorporated into lignins. The chain is Caffeic acid 3-O-methyltransferase (COMT) from Capsicum annuum (Capsicum pepper).